Reading from the N-terminus, the 113-residue chain is MRELPKIFGDKSEDLATLFLEQEGFIVIERNYFARKLGEIDIIAQKDEVLHFIEVKSGKADFDPVYNVTPDKLRKVINSAHYYMKSKKIDVSFSVDALIIRGDEVEFIENVTL.

This sequence belongs to the UPF0102 family.

The chain is UPF0102 protein SUN_0231 from Sulfurovum sp. (strain NBC37-1).